The chain runs to 238 residues: Large ribosomal subunit protein uL2 (238 aa).

The disordered stretch occupies residues 201–238 (FGGGGHQHPGRPKTIARGTSPGRTVGHVAARQTGRSRK).

The protein belongs to the universal ribosomal protein uL2 family. In terms of assembly, part of the 50S ribosomal subunit. Forms a bridge to the 30S subunit in the 70S ribosome.

In terms of biological role, one of the primary rRNA binding proteins. Required for association of the 30S and 50S subunits to form the 70S ribosome, for tRNA binding and peptide bond formation. It has been suggested to have peptidyltransferase activity; this is somewhat controversial. Makes several contacts with the 16S rRNA in the 70S ribosome. This is Large ribosomal subunit protein uL2 from Methanoregula boonei (strain DSM 21154 / JCM 14090 / 6A8).